A 1657-amino-acid chain; its full sequence is Ras GTPase-activating-like protein IQGAP1 (1657 aa).

Serine 2 is modified (N-acetylserine). Serine 2 bears the Phosphoserine mark. The region spanning 44-159 is the Calponin-homology (CH) domain; it reads LCHLEEAKRW…YCIHALSLYL (116 aa). Tyrosine 172 is subject to Phosphotyrosine. The residue at position 330 (serine 330) is a Phosphoserine. One can recognise a WW domain in the interval 685 to 710; sequence WVKHWVKGGYHYYHNLETQAGGWAEP. 4 IQ domains span residues 745-774, 775-804, 805-834, and 835-864; these read NEGLITKLQACCRGYLVRQEFRSRMNFLKK, QIPAITCIQSQWRGYKQKKAYQDRLAYLHS, HKDEVVKIQSLARMHQARKRYRDRLQYFRD, and HINDIIKIQAFIRANKARDDYKTLINAEDP. Residues 956–1274 are C1; the sequence is GGLKALSKEK…FFQVACDVPE (319 aa). One can recognise a Ras-GAP domain in the interval 1020–1269; the sequence is YLLLRLFQTA…QKFRRFFQVA (250 aa). The segment at 1276-1657 is C2; sequence QDKFNVDEYS…FLLNKKFYGK (382 aa). Serine 1441 is subject to Phosphoserine.

Interacts with CDC42; the interaction is demonstrated with IQGAP1 in GTP-bound and in nucleotide-free state. Interacts with RAC1. Does not interact with RHOA. Interacts with TSG101. Interacts with PAK6. Interacts with SASH1. Interacts with PJVK. Interacts with SLC26A4. This interaction enhances the chloride-bicarbonate exchange activity of SLC26A4. Interacts with SVEP1. Interacts with ILK; the interaction is required for localization of IQGAP to the cell cortex. In terms of assembly, (Microbial infection) In case of infection, interacts with S.typhimurium protein sseI. As to expression, expressed in the kidney (at protein level).

It localises to the cell membrane. The protein resides in the nucleus. Its subcellular location is the cytoplasm. It is found in the cell cortex. The protein localises to the apical cell membrane. It localises to the basolateral cell membrane. Functionally, plays a crucial role in regulating the dynamics and assembly of the actin cytoskeleton. Recruited to the cell cortex by interaction with ILK which allows it to cooperate with its effector DIAPH1 to locally stabilize microtubules and allow stable insertion of caveolae into the plasma membrane. Binds to activated CDC42 but does not stimulate its GTPase activity. Associates with calmodulin. May promote neurite outgrowth. May play a possible role in cell cycle regulation by contributing to cell cycle progression after DNA replication arrest. The sequence is that of Ras GTPase-activating-like protein IQGAP1 (Iqgap1) from Mus musculus (Mouse).